Consider the following 277-residue polypeptide: Putative ankyrin repeat protein L81 (277 aa).

ANK repeat units follow at residues 150–179 (FGQT…DLHQ) and 183–215 (QGRS…DLYQ).

In Acanthamoeba polyphaga (Amoeba), this protein is Putative ankyrin repeat protein L81.